A 452-amino-acid chain; its full sequence is Protein phosphatase 1F (452 aa).

The PPM-type phosphatase domain maps to 153–410; sequence LVSIHAIRNT…DNITVMVVFL (258 aa). The Mn(2+) site is built by Asp195, Gly196, Asp357, and Asp401. Residue Ser452 is modified to Phosphoserine.

Belongs to the PP2C family. Associates with FEM1B. The cofactor is Mg(2+). It depends on Mn(2+) as a cofactor. Expressed in the liver.

It catalyses the reaction O-phospho-L-seryl-[protein] + H2O = L-seryl-[protein] + phosphate. It carries out the reaction O-phospho-L-threonyl-[protein] + H2O = L-threonyl-[protein] + phosphate. In terms of biological role, dephosphorylates and concomitantly deactivates CaM-kinase II activated upon autophosphorylation, and CaM-kinases IV and I activated upon phosphorylation by CaM-kinase kinase. Promotes apoptosis. This chain is Protein phosphatase 1F (Ppm1f), found in Mus musculus (Mouse).